Consider the following 466-residue polypeptide: ATP synthase subunit beta (466 aa).

ATP is bound at residue 152–159; that stretch reads GGAGVGKT.

It belongs to the ATPase alpha/beta chains family. As to quaternary structure, F-type ATPases have 2 components, CF(1) - the catalytic core - and CF(0) - the membrane proton channel. CF(1) has five subunits: alpha(3), beta(3), gamma(1), delta(1), epsilon(1). CF(0) has three main subunits: a(1), b(2) and c(9-12). The alpha and beta chains form an alternating ring which encloses part of the gamma chain. CF(1) is attached to CF(0) by a central stalk formed by the gamma and epsilon chains, while a peripheral stalk is formed by the delta and b chains.

The protein localises to the cell inner membrane. It catalyses the reaction ATP + H2O + 4 H(+)(in) = ADP + phosphate + 5 H(+)(out). In terms of biological role, produces ATP from ADP in the presence of a proton gradient across the membrane. The catalytic sites are hosted primarily by the beta subunits. This chain is ATP synthase subunit beta, found in Helicobacter acinonychis (strain Sheeba).